The chain runs to 393 residues: MHRITILGATGSIGESTLDVIRRHPGRYAAHALSAHRQVRKLADQCIEFRPARAVVGTAEAARELETLLRDASVATEVSYGEAALESIAADAQTDAVMAAIVGAAGLRPTLAAARAGKRVLLANKEALVMSGRIFMDAVREHGATLLPIDSEHNAIFQCLPADDPRYGRGVAKVLLTASGGPFRTRDPATLHDISPDQACAHPNWVMGRKISVDSATMMNKGLEVIEAHWLFGAPAERIEVLIHPQSIVHSMVAYTDGSVLAQLGNPDMRTPIAYGLAYPERIDAGVTPLDLTLAGGLHFEKPDLARFPCLGLAFDALRAAGVAPAVLNAANEVGVEAFLAGQVRFTDIAGIVRQVLEEAPSGPADTLEAVLAADALAREAARAGVTARAAAR.

NADPH is bound by residues Thr10, Gly11, Ser12, Ile13, Arg37, Gln38, and Asn124. Position 125 (Lys125) interacts with 1-deoxy-D-xylulose 5-phosphate. Glu126 is an NADPH binding site. Asp150 is a binding site for Mn(2+). Positions 151, 152, 179, and 202 each coordinate 1-deoxy-D-xylulose 5-phosphate. Mn(2+) is bound at residue Glu152. Residue Gly208 participates in NADPH binding. Residues Ser215, Asn220, Lys221, and Glu224 each coordinate 1-deoxy-D-xylulose 5-phosphate. Glu224 contributes to the Mn(2+) binding site.

This sequence belongs to the DXR family. Mg(2+) is required as a cofactor. The cofactor is Mn(2+).

It carries out the reaction 2-C-methyl-D-erythritol 4-phosphate + NADP(+) = 1-deoxy-D-xylulose 5-phosphate + NADPH + H(+). It functions in the pathway isoprenoid biosynthesis; isopentenyl diphosphate biosynthesis via DXP pathway; isopentenyl diphosphate from 1-deoxy-D-xylulose 5-phosphate: step 1/6. Functionally, catalyzes the NADPH-dependent rearrangement and reduction of 1-deoxy-D-xylulose-5-phosphate (DXP) to 2-C-methyl-D-erythritol 4-phosphate (MEP). The polypeptide is 1-deoxy-D-xylulose 5-phosphate reductoisomerase (Cupriavidus taiwanensis (strain DSM 17343 / BCRC 17206 / CCUG 44338 / CIP 107171 / LMG 19424 / R1) (Ralstonia taiwanensis (strain LMG 19424))).